The sequence spans 511 residues: Endoglucanase B (511 aa).

The signal sequence occupies residues 1-29 (MNLLSGWVRPLMLGCGLLGAALSAGSIQA). Residues 30–130 (AVCEYRVTNE…AVTGAICGGQ (101 aa)) form the CBM2 domain. Cys-32 and Cys-127 are joined by a disulfide. Residues 137–173 (SVASSSSSSSVVSSTPRSSSSSVSSSVPGTSSSSSSS) are disordered. Positions 180 to 209 (ACNWYGTLTPLCNNTSNGWGYEDGRSCVAR) constitute a CBM10 domain. 2 disulfide bridges follow: Cys-181–Cys-212 and Cys-191–Cys-206. Residue Asp-276 is the Nucleophile of the active site. The Proton donor role is filled by Asp-393.

Belongs to the glycosyl hydrolase 45 (cellulase K) family.

The protein localises to the periplasm. The catalysed reaction is Endohydrolysis of (1-&gt;4)-beta-D-glucosidic linkages in cellulose, lichenin and cereal beta-D-glucans.. In terms of biological role, this enzyme catalyzes the endohydrolysis of 1,4-beta-glucosidic linkages in cellulose, lichenin and cereal beta-D-glucans. EGB is most active against barley beta-glucan, but showed significant activity against amorphous and crystalline cellulose. This Cellvibrio japonicus (strain Ueda107) (Pseudomonas fluorescens subsp. cellulosa) protein is Endoglucanase B (celB).